The primary structure comprises 212 residues: Adenylate kinase (212 aa).

Residue 10-15 (GAGKGT) coordinates ATP. Residues 30–59 (AIGDIFRTIIKTSTSEAELINNYVRQGELI) form an NMP region. Residues arginine 36, 57 to 59 (ELI), 85 to 88 (GYPR), and glutamine 92 each bind AMP. An LID region spans residues 122–160 (GRYSCKNCGKIYNRYFLQPKTDNVCDVCGSSTFDYRKDD). Position 123 (arginine 123) interacts with ATP. Positions 126 and 129 each coordinate Zn(2+). 132 to 133 (IY) provides a ligand contact to ATP. Residues cysteine 146 and cysteine 149 each coordinate Zn(2+). Residues arginine 157 and arginine 168 each contribute to the AMP site. Position 196 (lysine 196) interacts with ATP.

This sequence belongs to the adenylate kinase family. Monomer.

Its subcellular location is the cytoplasm. The enzyme catalyses AMP + ATP = 2 ADP. It participates in purine metabolism; AMP biosynthesis via salvage pathway; AMP from ADP: step 1/1. Catalyzes the reversible transfer of the terminal phosphate group between ATP and AMP. Plays an important role in cellular energy homeostasis and in adenine nucleotide metabolism. The chain is Adenylate kinase from Rickettsia peacockii (strain Rustic).